We begin with the raw amino-acid sequence, 434 residues long: Beta-enolase (434 aa).

N-acetylalanine is present on Ala2. Thr72 bears the Phosphothreonine mark. 2 positions are modified to phosphoserine: Ser83 and Ser157. Positions 158 and 167 each coordinate substrate. Ser176 carries the phosphoserine modification. Thr205 is modified (phosphothreonine). Glu210 (proton donor) is an active-site residue. Position 229 is a phosphothreonine (Thr229). Tyr236 is subject to Phosphotyrosine. A Mg(2+)-binding site is contributed by Asp245. A Phosphoserine modification is found at Ser263. Substrate is bound by residues Glu293 and Asp318. The Mg(2+) site is built by Glu293 and Asp318. Catalysis depends on Lys343, which acts as the Proton acceptor. Substrate contacts are provided by residues 370–373 and Lys394; that span reads SHRS.

This sequence belongs to the enolase family. As to quaternary structure, mammalian enolase is composed of 3 isozyme subunits, alpha, beta and gamma, which can form homodimers or heterodimers which are cell-type and development-specific. Interacts with PNKD. Requires Mg(2+) as cofactor.

Its subcellular location is the cytoplasm. It carries out the reaction (2R)-2-phosphoglycerate = phosphoenolpyruvate + H2O. It functions in the pathway carbohydrate degradation; glycolysis; pyruvate from D-glyceraldehyde 3-phosphate: step 4/5. In terms of biological role, glycolytic enzyme that catalyzes the conversion of 2-phosphoglycerate to phosphoenolpyruvate. Appears to have a function in striated muscle development and regeneration. The chain is Beta-enolase (ENO3) from Bos taurus (Bovine).